We begin with the raw amino-acid sequence, 349 residues long: Phenylalanine--tRNA ligase alpha subunit (349 aa).

Glu-261 contributes to the Mg(2+) binding site.

It belongs to the class-II aminoacyl-tRNA synthetase family. Phe-tRNA synthetase alpha subunit type 1 subfamily. In terms of assembly, tetramer of two alpha and two beta subunits. Requires Mg(2+) as cofactor.

Its subcellular location is the cytoplasm. It catalyses the reaction tRNA(Phe) + L-phenylalanine + ATP = L-phenylalanyl-tRNA(Phe) + AMP + diphosphate + H(+). In Leuconostoc citreum (strain KM20), this protein is Phenylalanine--tRNA ligase alpha subunit.